A 128-amino-acid chain; its full sequence is MAVGTSALSKEPWWTLPENFHSPMVFHMEEDQEELIFGLDDTYLRCIELHSHTLIQLERCFTATGQTRVTVVGPPMAKQWLLLMFHCVGSQDSKCHARGLKMLERVRSQPLTNDDLVTSVSLPPYTGD.

It belongs to the KHDC1 family.

This is KHDC1-like protein (KHDC1L) from Homo sapiens (Human).